The primary structure comprises 528 residues: Arginine--tRNA ligase (528 aa).

The 'HIGH' region signature appears at 112-122 (ANPTGPLHIGH).

The protein belongs to the class-I aminoacyl-tRNA synthetase family. As to quaternary structure, monomer.

It localises to the cytoplasm. The enzyme catalyses tRNA(Arg) + L-arginine + ATP = L-arginyl-tRNA(Arg) + AMP + diphosphate. This chain is Arginine--tRNA ligase, found in Wolinella succinogenes (strain ATCC 29543 / DSM 1740 / CCUG 13145 / JCM 31913 / LMG 7466 / NCTC 11488 / FDC 602W) (Vibrio succinogenes).